Consider the following 111-residue polypeptide: Nucleoid-associated protein NMC1380 (111 aa).

It belongs to the YbaB/EbfC family. Homodimer.

It localises to the cytoplasm. The protein localises to the nucleoid. Binds to DNA and alters its conformation. May be involved in regulation of gene expression, nucleoid organization and DNA protection. This is Nucleoid-associated protein NMC1380 from Neisseria meningitidis serogroup C / serotype 2a (strain ATCC 700532 / DSM 15464 / FAM18).